The primary structure comprises 91 residues: DNA-directed RNA polymerase subunit omega (91 aa).

Belongs to the RNA polymerase subunit omega family. In terms of assembly, the RNAP catalytic core consists of 2 alpha, 1 beta, 1 beta' and 1 omega subunit. When a sigma factor is associated with the core the holoenzyme is formed, which can initiate transcription.

The enzyme catalyses RNA(n) + a ribonucleoside 5'-triphosphate = RNA(n+1) + diphosphate. In terms of biological role, promotes RNA polymerase assembly. Latches the N- and C-terminal regions of the beta' subunit thereby facilitating its interaction with the beta and alpha subunits. This is DNA-directed RNA polymerase subunit omega from Yersinia pestis bv. Antiqua (strain Antiqua).